The primary structure comprises 60 residues: Translational regulator CsrA (60 aa).

It belongs to the CsrA/RsmA family. As to quaternary structure, homodimer; the beta-strands of each monomer intercalate to form a hydrophobic core, while the alpha-helices form wings that extend away from the core.

The protein localises to the cytoplasm. Its function is as follows. A key translational regulator that binds mRNA to regulate translation initiation and/or mRNA stability. Mediates global changes in gene expression, shifting from rapid growth to stress survival by linking envelope stress, the stringent response and the catabolite repression systems. Usually binds in the 5'-UTR; binding at or near the Shine-Dalgarno sequence prevents ribosome-binding, repressing translation, binding elsewhere in the 5'-UTR can activate translation and/or stabilize the mRNA. Its function is antagonized by small RNA(s). The polypeptide is Translational regulator CsrA (Histophilus somni (strain 2336) (Haemophilus somnus)).